The chain runs to 256 residues: Cell division protein DivIB (256 aa).

Residues 1-23 are Cytoplasmic-facing; that stretch reads MSKDLISTDEYIKIKKKRKRIKK. Residues 24–44 traverse the membrane as a helical segment; the sequence is IVVLFIFLISILVTLCLKIPY. Residues 45-113 enclose the POTRA domain; it reads FNIESIEIKG…NKLQIYVKER (69 aa). The Extracellular segment spans residues 45–256; it reads FNIESIEIKG…EGNPVFYIEK (212 aa).

This sequence belongs to the FtsQ/DivIB family. DivIB subfamily.

The protein resides in the cell membrane. In terms of biological role, cell division protein that may be involved in stabilizing or promoting the assembly of the division complex. The chain is Cell division protein DivIB from Clostridium botulinum (strain Hall / ATCC 3502 / NCTC 13319 / Type A).